The following is a 516-amino-acid chain: GMP synthase [glutamine-hydrolyzing] (516 aa).

The Glutamine amidotransferase type-1 domain occupies 8–198 (KILILDFGSQ…VVNICGCDTL (191 aa)). The active-site Nucleophile is Cys84. Active-site residues include His172 and Glu174. The GMPS ATP-PPase domain occupies 199–391 (WNIENIIEND…LGLPYNMLYR (193 aa)). ATP is bound at residue 226-232 (SGGVDSS).

In terms of assembly, homodimer.

It catalyses the reaction XMP + L-glutamine + ATP + H2O = GMP + L-glutamate + AMP + diphosphate + 2 H(+). The protein operates within purine metabolism; GMP biosynthesis; GMP from XMP (L-Gln route): step 1/1. Catalyzes the synthesis of GMP from XMP. This chain is GMP synthase [glutamine-hydrolyzing], found in Francisella tularensis subsp. novicida (strain U112).